The following is a 1323-amino-acid chain: Lysine-specific demethylase 3A (1323 aa).

Disordered stretches follow at residues 255–287 (TRTGAVKRKSSENNGSSVSKQAKSCSEASPSMC), 307–337 (ATPSSKDPRQQNTPQAANSPPNIGAKLPQGC), and 385–416 (SEPKGSCIQPKTNTDQESRLESAPQPVTGLPK). Serine 264 carries the phosphoserine modification. Composition is skewed to polar residues over residues 266–283 (ENNGSSVSKQAKSCSEAS) and 307–327 (ATPSSKDPRQQNTPQAANSPP). Position 325 is a phosphoserine (serine 325). Serine 446 bears the Phosphoserine mark. Disordered stretches follow at residues 468-487 (AEKKVEPSHLGSQSQNLKET) and 495-517 (SCCTRSSNKTQTPPARKSVLTDP). Polar residues-rich tracts occupy residues 477 to 486 (LGSQSQNLKE) and 495 to 507 (SCCTRSSNKTQTP). Residues 662-687 (CDVCDTTIFNLHWVCPRCGFGVCVDC) form a C6-type zinc finger. An LXXLL motif motif is present at residues 885–889 (LRNLL). Position 895 is an N6-acetyllysine (lysine 895). Residues 1060–1283 (MPSRFDDLMA…HCFWLTQEFR (224 aa)) enclose the JmjC domain. Histidine 1122, aspartate 1124, and histidine 1251 together coordinate Fe cation.

The protein belongs to the JHDM2 histone demethylase family. Interacts with VRK1. It depends on Fe(2+) as a cofactor. As to expression, highly expressed in testis (at protein level). Also expressed at high levels in tissues responsive to sympathetic nerve activity such as brown adipose tissue and skeletal muscle.

Its subcellular location is the cytoplasm. The protein localises to the nucleus. It catalyses the reaction N(6),N(6)-dimethyl-L-lysyl(9)-[histone H3] + 2 2-oxoglutarate + 2 O2 = L-lysyl(9)-[histone H3] + 2 formaldehyde + 2 succinate + 2 CO2. Functionally, histone demethylase that specifically demethylates 'Lys-9' of histone H3, thereby playing a central role in histone code. Preferentially demethylates mono- and dimethylated H3 'Lys-9' residue, with a preference for dimethylated residue, while it has weak or no activity on trimethylated H3 'Lys-9'. Demethylation of Lys residue generates formaldehyde and succinate. Involved in hormone-dependent transcriptional activation, by participating in recruitment to androgen-receptor target genes, resulting in H3 'Lys-9' demethylation and transcriptional activation. Involved in spermatogenesis by regulating expression of target genes such as PRM1 and TNP1 which are required for packaging and condensation of sperm chromatin. Involved in obesity resistance through regulation of metabolic genes such as PPARA and UCP1. The chain is Lysine-specific demethylase 3A (Kdm3a) from Mus musculus (Mouse).